The following is a 476-amino-acid chain: 3-isopropylmalate dehydratase large subunit (476 aa).

The [4Fe-4S] cluster site is built by Cys355, Cys416, and Cys419.

Belongs to the aconitase/IPM isomerase family. LeuC type 1 subfamily. In terms of assembly, heterodimer of LeuC and LeuD. [4Fe-4S] cluster is required as a cofactor.

It carries out the reaction (2R,3S)-3-isopropylmalate = (2S)-2-isopropylmalate. Its pathway is amino-acid biosynthesis; L-leucine biosynthesis; L-leucine from 3-methyl-2-oxobutanoate: step 2/4. Catalyzes the isomerization between 2-isopropylmalate and 3-isopropylmalate, via the formation of 2-isopropylmaleate. The chain is 3-isopropylmalate dehydratase large subunit from Sphingopyxis alaskensis (strain DSM 13593 / LMG 18877 / RB2256) (Sphingomonas alaskensis).